The chain runs to 59 residues: uncharacterized protein (59 aa).

Residues 6-26 (WWLVVFAVFVFLFDTLLMQWI) traverse the membrane as a helical segment.

The protein localises to the membrane. This is an uncharacterized protein from Escherichia coli O157:H7.